A 577-amino-acid polypeptide reads, in one-letter code: MAAARLAASLLLLAAQVACEFGVLRVVPQSGGTRGRDYCILYNPQWAHLPHDLNKVSLLKLRDLSTTQLCSHLDVPVEDFTNQIALVARGNCTFYEKVRLAQGSGAHGLLIVSKERLVPPRGNKTQYEEISIPVALLSHRDLQDIFRRFGHEVMVALYAPSEPVMDYNMVIIFIMAVGTVALGGYWAGSHDVKKYMKHKRDDVPEKQEDEAVDVTPVMICVFVVMCCFMLVLLYYFYDRLVYVIIGIFCLASSTGLYSCLAPCVRKLPFCTCRVPDNNLPYFHKRPQARMLLLALFCVTVSVVWGVFRNEDQWAWVLQDTLGIAFCLYMLRTIRLPTFKACTLLLLVLFVYDIFFVFITPYLTKSGNSIMVEVATGPSNSSTHEKLPMVLKVPRLNTSPLSLCDRPFSLLGFGDILVPGLLVAYCHRFDIQVQSSRIYFVACTIAYGLGLLVTFVALVLMRHGQPALLYLVPCTLLTSCTVALWRREMGAFWTGSGFADAPQTPWAAPQGPVPPKDVDASLSEQPRGEELAQSPLATEEAGATDPAKDPDSPVAGPLSPSNGDQVQPIPVVTPGTSA.

The N-terminal stretch at 1-19 (MAAARLAASLLLLAAQVAC) is a signal peptide. At 20 to 168 (EFGVLRVVPQ…APSEPVMDYN (149 aa)) the chain is on the lumenal side. The PA domain occupies 49–149 (LPHDLNKVSL…RDLQDIFRRF (101 aa)). N-linked (GlcNAc...) asparagine glycosylation is present at Asn91. A helical membrane pass occupies residues 169 to 189 (MVIIFIMAVGTVALGGYWAGS). Topologically, residues 190–216 (HDVKKYMKHKRDDVPEKQEDEAVDVTP) are cytoplasmic. A helical membrane pass occupies residues 217–237 (VMICVFVVMCCFMLVLLYYFY). Over 238-239 (DR) the chain is Lumenal. Residues 240 to 260 (LVYVIIGIFCLASSTGLYSCL) form a helical membrane-spanning segment. The Cytoplasmic segment spans residues 261–286 (APCVRKLPFCTCRVPDNNLPYFHKRP). A helical membrane pass occupies residues 287 to 307 (QARMLLLALFCVTVSVVWGVF). At 308–312 (RNEDQ) the chain is on the lumenal side. Residues 313–333 (WAWVLQDTLGIAFCLYMLRTI) form a helical membrane-spanning segment. Residues 334-341 (RLPTFKAC) lie on the Cytoplasmic side of the membrane. Residues 342–362 (TLLLLVLFVYDIFFVFITPYL) traverse the membrane as a helical segment. Asp352 is a catalytic residue. At 363–405 (TKSGNSIMVEVATGPSNSSTHEKLPMVLKVPRLNTSPLSLCDR) the chain is on the lumenal side. The helical transmembrane segment at 406–426 (PFSLLGFGDILVPGLLVAYCH) threads the bilayer. Asp414 is an active-site residue. Topologically, residues 427 to 438 (RFDIQVQSSRIY) are cytoplasmic. A helical transmembrane segment spans residues 439–459 (FVACTIAYGLGLLVTFVALVL). Over 460–463 (MRHG) the chain is Lumenal. The chain crosses the membrane as a helical span at residues 464 to 484 (QPALLYLVPCTLLTSCTVALW). Residues 465–467 (PAL) carry the PAL motif. Residues 485–577 (RREMGAFWTG…IPVVTPGTSA (93 aa)) lie on the Cytoplasmic side of the membrane. The interval 502-577 (QTPWAAPQGP…IPVVTPGTSA (76 aa)) is disordered.

Belongs to the peptidase A22B family. In terms of assembly, monomer. Homodimer. Interacts with ITM2B and TNF. Post-translationally, glycosylated.

It is found in the cell membrane. It localises to the golgi apparatus membrane. Its subcellular location is the lysosome membrane. The protein localises to the endosome membrane. The protein resides in the membrane. In terms of biological role, intramembrane-cleaving aspartic protease (I-CLiP) that cleaves type II membrane signal peptides in the hydrophobic plane of the membrane. Functions in ITM2B and TNF processing. Catalyzes the intramembrane cleavage of the anchored fragment of shed TNF-alpha (TNF), which promotes the release of the intracellular domain (ICD) for signaling to the nucleus. May play a role in the regulation of innate and adaptive immunity. This Rattus norvegicus (Rat) protein is Signal peptide peptidase-like 2B.